Here is a 473-residue protein sequence, read N- to C-terminus: Anthocyanidin 5,3-O-glucosyltransferase (473 aa).

It belongs to the UDP-glycosyltransferase family.

It functions in the pathway pigment biosynthesis; anthocyanin biosynthesis. Sequentially catalyzes two glycosylation steps at the 5-OH and 3-OH positions of anthocyanidin. Unglycosylated anthocyanidin or anthocyanidin 5-O-glucoside, but not anthocyanidin 3-O-glucoside, can be used as glucosyl acceptor. This is Anthocyanidin 5,3-O-glucosyltransferase (RhGT1) from Rosa hybrid cultivar.